The following is a 440-amino-acid chain: Glutamyl-tRNA reductase (440 aa).

Substrate-binding positions include 47 to 50, serine 110, 115 to 117, and glutamine 121; these read TCNR and ERE. The active-site Nucleophile is cysteine 48. NADP(+) is bound at residue 192-197; sequence GTGAYA.

This sequence belongs to the glutamyl-tRNA reductase family. Homodimer.

The enzyme catalyses (S)-4-amino-5-oxopentanoate + tRNA(Glu) + NADP(+) = L-glutamyl-tRNA(Glu) + NADPH + H(+). It functions in the pathway porphyrin-containing compound metabolism; protoporphyrin-IX biosynthesis; 5-aminolevulinate from L-glutamyl-tRNA(Glu): step 1/2. Catalyzes the NADPH-dependent reduction of glutamyl-tRNA(Glu) to glutamate 1-semialdehyde (GSA). The polypeptide is Glutamyl-tRNA reductase (Paenarthrobacter aurescens (strain TC1)).